The following is a 176-amino-acid chain: ATP-dependent protease subunit HslV (176 aa).

Residue Thr-2 is part of the active site. The Na(+) site is built by Ser-157, Cys-160, and Thr-163.

It belongs to the peptidase T1B family. HslV subfamily. As to quaternary structure, a double ring-shaped homohexamer of HslV is capped on each side by a ring-shaped HslU homohexamer. The assembly of the HslU/HslV complex is dependent on binding of ATP.

The protein resides in the cytoplasm. It catalyses the reaction ATP-dependent cleavage of peptide bonds with broad specificity.. Allosterically activated by HslU binding. In terms of biological role, protease subunit of a proteasome-like degradation complex believed to be a general protein degrading machinery. The protein is ATP-dependent protease subunit HslV of Buchnera aphidicola subsp. Baizongia pistaciae (strain Bp).